We begin with the raw amino-acid sequence, 194 residues long: Peptidyl-tRNA hydrolase (194 aa).

Y17 contacts tRNA. H22 acts as the Proton acceptor in catalysis. Residues F68, N70, and N116 each contribute to the tRNA site.

Belongs to the PTH family. Monomer.

Its subcellular location is the cytoplasm. The enzyme catalyses an N-acyl-L-alpha-aminoacyl-tRNA + H2O = an N-acyl-L-amino acid + a tRNA + H(+). Its function is as follows. Hydrolyzes ribosome-free peptidyl-tRNAs (with 1 or more amino acids incorporated), which drop off the ribosome during protein synthesis, or as a result of ribosome stalling. In terms of biological role, catalyzes the release of premature peptidyl moieties from peptidyl-tRNA molecules trapped in stalled 50S ribosomal subunits, and thus maintains levels of free tRNAs and 50S ribosomes. The polypeptide is Peptidyl-tRNA hydrolase (Actinobacillus pleuropneumoniae serotype 7 (strain AP76)).